The sequence spans 108 residues: UPF0060 membrane protein Sca_1835 (108 aa).

Helical transmembrane passes span 5–25 (ILIF…IWLW), 34–54 (FGLL…FQVF), 60–80 (VYAA…YVFD), and 84–104 (PDKY…IMLL).

This sequence belongs to the UPF0060 family.

The protein resides in the cell membrane. The polypeptide is UPF0060 membrane protein Sca_1835 (Staphylococcus carnosus (strain TM300)).